The chain runs to 116 residues: MRSAMLFAAVLALSLAWTFGAACEEPQEQGGRLSKDSDLSLLPPPLLRRLYDSRSISLEGLLKVLSKASVGPKETSLPQKRDMHDFFVGLMGKRNSQPDTPADVVEENTPSFGVLK.

The first 20 residues, 1–20 (MRSAMLFAAVLALSLAWTFG), serve as a signal peptide directing secretion. The propeptide occupies 21–79 (AACEEPQEQGGRLSKDSDLSLLPPPLLRRLYDSRSISLEGLLKVLSKASVGPKETSLPQ). Position 91 is a methionine amide (Met-91). Residues 92 to 116 (GKRNSQPDTPADVVEENTPSFGVLK) form a disordered region. Positions 95-116 (NSQPDTPADVVEENTPSFGVLK) are excised as a propeptide.

The protein belongs to the tachykinin family.

Its subcellular location is the secreted. In terms of biological role, tachykinins are active peptides which excite neurons, evoke behavioral responses, are potent vasodilators and secretagogues, and contract (directly or indirectly) many smooth muscles. Is a critical central regulator of gonadal function. The sequence is that of Tachykinin-3 (Tac3) from Rattus norvegicus (Rat).